We begin with the raw amino-acid sequence, 433 residues long: 5-methylthioadenosine/S-adenosylhomocysteine deaminase (433 aa).

Residues His-62 and His-64 each contribute to the Zn(2+) site. The substrate site is built by Glu-91, Arg-143, and His-183. Residue His-210 participates in Zn(2+) binding. Positions 213 and 298 each coordinate substrate. Asp-298 contributes to the Zn(2+) binding site.

It belongs to the metallo-dependent hydrolases superfamily. MTA/SAH deaminase family. Zn(2+) serves as cofactor.

It carries out the reaction S-adenosyl-L-homocysteine + H2O + H(+) = S-inosyl-L-homocysteine + NH4(+). The catalysed reaction is S-methyl-5'-thioadenosine + H2O + H(+) = S-methyl-5'-thioinosine + NH4(+). In terms of biological role, catalyzes the deamination of 5-methylthioadenosine and S-adenosyl-L-homocysteine into 5-methylthioinosine and S-inosyl-L-homocysteine, respectively. Is also able to deaminate adenosine. The protein is 5-methylthioadenosine/S-adenosylhomocysteine deaminase of Caldanaerobacter subterraneus subsp. tengcongensis (strain DSM 15242 / JCM 11007 / NBRC 100824 / MB4) (Thermoanaerobacter tengcongensis).